A 519-amino-acid polypeptide reads, in one-letter code: Baeyer-Villiger monooxygenase (519 aa).

FAD-binding positions include glutamate 41, 49–52, aspartate 61, tyrosine 67, and valine 110; that span reads TWRD. 59–61 contacts NADP(+); it reads ACD. Residues 183 to 189, 206 to 207, and 292 to 293 each bind NADP(+); these read TGASAIQ, RT, and KR. Methionine 399 provides a ligand contact to FAD. The interval 499–519 is disordered; it reads GAKAAEADTGADTGADAEVSA.

The protein belongs to the FAD-binding monooxygenase family. FAD is required as a cofactor.

In terms of biological role, catalyzes a Baeyer-Villiger oxidation reaction, i.e. the insertion of an oxygen atom into a carbon-carbon bond adjacent to a carbonyl, which converts ketones to esters or lactones using NADPH and/or NADH as an electron donor. Thus, can convert bicyclo[3.2.0]hept-2-en-6-one into the oxidative lactone products 2-oxabicyclo[3.3.0]oct-6-en-3-one and 3-oxabicyclo[3.3.0]oct-6-en-2-one. Is also able to catalyze the sulfoxidation of methyl phenyl sulfide (thioanisole). In Streptomyces coelicolor (strain ATCC BAA-471 / A3(2) / M145), this protein is Baeyer-Villiger monooxygenase.